Here is a 214-residue protein sequence, read N- to C-terminus: Adenylate kinase (214 aa).

ATP is bound at residue 10 to 15 (GAGKGT). The NMP stretch occupies residues 30-59 (STGDMLRAAIKAGTELGKQAKSVIDAGQLV). AMP contacts are provided by residues threonine 31, arginine 36, 57-59 (QLV), 85-88 (GFPR), and glutamine 92. The interval 122-159 (GRRAHLASGRTYHNVYNPPKVEGKDDVTGEDLVIREDD) is LID. Residues arginine 123 and 132 to 133 (TY) contribute to the ATP site. Residues arginine 156 and arginine 167 each coordinate AMP. Lysine 200 provides a ligand contact to ATP.

It belongs to the adenylate kinase family. As to quaternary structure, monomer.

The protein resides in the cytoplasm. It carries out the reaction AMP + ATP = 2 ADP. The protein operates within purine metabolism; AMP biosynthesis via salvage pathway; AMP from ADP: step 1/1. Functionally, catalyzes the reversible transfer of the terminal phosphate group between ATP and AMP. Plays an important role in cellular energy homeostasis and in adenine nucleotide metabolism. The protein is Adenylate kinase of Photobacterium profundum (strain SS9).